A 590-amino-acid polypeptide reads, in one-letter code: Keratin, type II cytoskeletal 5 (590 aa).

The segment covering 1–18 (MSRQSSVSFRSGGSRSFS) has biased composition (low complexity). The segment at 1 to 20 (MSRQSSVSFRSGGSRSFSTA) is disordered. Residues 1–167 (MSRQSSVSFR…DPSIQRVRTE (167 aa)) form a head region. A phosphoserine mark is found at Ser-5, Ser-8, Ser-16, and Ser-21. Thr-24 is subject to Phosphothreonine; by CDK1. Phosphoserine occurs at positions 26, 36, 50, 64, 71, 75, and 82. Thr-151 carries the phosphothreonine; by CDK1 modification. The interval 168–203 (EREQIKTLNNKFASFIDKVRFLEQQNKVLDTKWTLL) is coil 1A. Residues 168 to 481 (EREQIKTLNN…KLLEGEECRL (314 aa)) enclose the IF rod domain. Residues 204 to 222 (QEQGTKTVRQNLEPLFEQY) are linker 1. Positions 223 to 315 (INNLRRQLDS…FFDAELSQMQ (93 aa)) are coil 1B. Positions 316-338 (THVSDTSVVLSMDNNRNLDLDSI) are linker 12. Residues 339–477 (IAEVKAQYEE…ATYRKLLEGE (139 aa)) form a coil 2 region. A tail region spans residues 478 to 590 (ECRLSGEGVG…TSSSRKSFKS (113 aa)). A disordered region spans residues 566–590 (GSGGGSSSSVKFVSTTSSSRKSFKS). The span at 572-590 (SSSVKFVSTTSSSRKSFKS) shows a compositional bias: low complexity.

The protein belongs to the intermediate filament family. In terms of assembly, heterodimer of a type I and a type II keratin. Heterodimer with type I keratin KRT25 leading to the formation of keratin intermediate filament (KIF) network. Forms a heterodimer (via 2B domains) with KRT14 (via 2B domains). Interacts with PLEC isoform 1C, when in a heterodimer with KRT14. Interacts with TCHP. Interacts with EPPK1. Interacts with AMELX. Interacts with PKP1 (via N-terminus) and PKP2. In terms of processing, phosphorylated by CDK1, AURKB and Rho-kinase, phosphorylation is regulated by the cell cycle. Thr-24 phosphorylation, mediated by CDK1, peaks during prometaphase or metaphase cells with phosphorylated filamentous structures evident throughout the cytoplasm during early mitosis. CDK1 phosphorylates Thr-24 in mitotic cells at the site of injury. O-glycosylated. As to expression, expressed in corneal epithelium (at protein level). Expressed in keratinocytes (at protein level).

It localises to the cytoplasm. Functionally, required for the formation of keratin intermediate filaments in the basal epidermis and maintenance of the skin barrier in response to mechanical stress. Regulates the recruitment of Langerhans cells to the epidermis, potentially by modulation of the abundance of macrophage chemotactic cytokines, macrophage inflammatory cytokines and CTNND1 localization in keratinocytes. The sequence is that of Keratin, type II cytoskeletal 5 (KRT5) from Homo sapiens (Human).